A 554-amino-acid polypeptide reads, in one-letter code: Valerianol synthase TPS1C (554 aa).

The Mg(2+) site is built by Asp-307 and Asp-311. A DDXXD motif motif is present at residues 326–330 (VQRWD). 3 residues coordinate Mg(2+): Asp-452, Ser-456, and Glu-460.

The protein belongs to the terpene synthase family. Mg(2+) serves as cofactor.

The catalysed reaction is (2E,6E)-farnesyl diphosphate + H2O = valerianol + diphosphate. It functions in the pathway secondary metabolite biosynthesis; terpenoid biosynthesis. Functionally, terpene synthase that catalyzes the biosynthesis of the terpene valerianol, which is a volatile compound of floral scent. The sequence is that of Valerianol synthase TPS1C from Camellia hiemalis (Camellia).